The primary structure comprises 443 residues: ATP-dependent protease ATPase subunit HslU (443 aa).

ATP is bound by residues Ile-18, 60-65 (GVGKTE), Asp-256, Glu-321, and Arg-393.

It belongs to the ClpX chaperone family. HslU subfamily. A double ring-shaped homohexamer of HslV is capped on each side by a ring-shaped HslU homohexamer. The assembly of the HslU/HslV complex is dependent on binding of ATP.

The protein localises to the cytoplasm. In terms of biological role, ATPase subunit of a proteasome-like degradation complex; this subunit has chaperone activity. The binding of ATP and its subsequent hydrolysis by HslU are essential for unfolding of protein substrates subsequently hydrolyzed by HslV. HslU recognizes the N-terminal part of its protein substrates and unfolds these before they are guided to HslV for hydrolysis. The sequence is that of ATP-dependent protease ATPase subunit HslU from Pectobacterium atrosepticum (strain SCRI 1043 / ATCC BAA-672) (Erwinia carotovora subsp. atroseptica).